The sequence spans 566 residues: Type 3 secretion system secretin (566 aa).

Residues 1–22 (MKKFNIKSLTLLIVLLPLIVNA) form the signal peptide.

This sequence belongs to the bacterial secretin family. T3SS SctC subfamily. As to quaternary structure, the core secretion machinery of the T3SS is composed of approximately 20 different proteins, including cytoplasmic components, a base, an export apparatus and a needle. This subunit is part of the base, which anchors the injectisome in the bacterial cell envelope. Forms a stable homooligomeric complex.

It is found in the cell outer membrane. In terms of biological role, component of the type III secretion system (T3SS), also called injectisome, which is used to inject bacterial effector proteins into eukaryotic host cells. Forms a ring-shaped multimeric structure with an apparent central pore in the outer membrane. This is Type 3 secretion system secretin from Shigella sonnei.